The primary structure comprises 659 residues: Biosynthetic arginine decarboxylase (659 aa).

An N6-(pyridoxal phosphate)lysine modification is found at Lys128. 308–318 (FDVGGGLGVDY) is a substrate binding site.

The protein belongs to the Orn/Lys/Arg decarboxylase class-II family. SpeA subfamily. Mg(2+) is required as a cofactor. The cofactor is pyridoxal 5'-phosphate.

The enzyme catalyses L-arginine + H(+) = agmatine + CO2. Its pathway is amine and polyamine biosynthesis; agmatine biosynthesis; agmatine from L-arginine: step 1/1. Catalyzes the biosynthesis of agmatine from arginine. The sequence is that of Biosynthetic arginine decarboxylase from Yersinia pestis.